The sequence spans 265 residues: 3-deoxy-manno-octulosonate cytidylyltransferase (265 aa).

Belongs to the KdsB family.

It is found in the cytoplasm. It catalyses the reaction 3-deoxy-alpha-D-manno-oct-2-ulosonate + CTP = CMP-3-deoxy-beta-D-manno-octulosonate + diphosphate. The protein operates within nucleotide-sugar biosynthesis; CMP-3-deoxy-D-manno-octulosonate biosynthesis; CMP-3-deoxy-D-manno-octulosonate from 3-deoxy-D-manno-octulosonate and CTP: step 1/1. It functions in the pathway bacterial outer membrane biogenesis; lipopolysaccharide biosynthesis. Activates KDO (a required 8-carbon sugar) for incorporation into bacterial lipopolysaccharide in Gram-negative bacteria. The sequence is that of 3-deoxy-manno-octulosonate cytidylyltransferase from Delftia acidovorans (strain DSM 14801 / SPH-1).